Here is a 223-residue protein sequence, read N- to C-terminus: Methanol utilization control regulatory protein MoxX (223 aa).

Positions 16–133 constitute a Response regulatory domain; it reads QILIVDDHPV…EICAAFTEVA (118 aa). The region spanning 155-220 is the HTH luxR-type domain; sequence PGTSAPRLTG…DLVVKGIRYF (66 aa). The H-T-H motif DNA-binding region spans 179 to 198; that stretch reads YRDIADRACISYKTVSNVSL.

Post-translationally, phosphorylated by MoxY.

Its subcellular location is the cytoplasm. In terms of biological role, member of the two-component regulatory system MoxY/MoxX probably involved in the regulation of the methanol dehydrogenase expression. The sequence is that of Methanol utilization control regulatory protein MoxX (moxX) from Paracoccus denitrificans.